A 236-amino-acid chain; its full sequence is MNSLSYLNHELAKFPSPEFALTDPNGLLAIGGDLHPKRLLNAYYEGIFPWFNENDPILWWSPDPRAVFVPGSLKVSRSLKRDIKRRQWRFSVNRAFNSVIEHCALTRQGKEGTWITLEIQQAYKALHKYNKAHSIEVWDGDKLIGGLYGVAIGQVFCGESMFHLQSNASKAAMAMLHQHLLSHRYRLIDAQVMNPHLASLGAKALKRADFINLLKRFRDIEVASDAWHPQEVQIEL.

It belongs to the L/F-transferase family.

The protein localises to the cytoplasm. The catalysed reaction is N-terminal L-lysyl-[protein] + L-leucyl-tRNA(Leu) = N-terminal L-leucyl-L-lysyl-[protein] + tRNA(Leu) + H(+). It catalyses the reaction N-terminal L-arginyl-[protein] + L-leucyl-tRNA(Leu) = N-terminal L-leucyl-L-arginyl-[protein] + tRNA(Leu) + H(+). The enzyme catalyses L-phenylalanyl-tRNA(Phe) + an N-terminal L-alpha-aminoacyl-[protein] = an N-terminal L-phenylalanyl-L-alpha-aminoacyl-[protein] + tRNA(Phe). Functionally, functions in the N-end rule pathway of protein degradation where it conjugates Leu, Phe and, less efficiently, Met from aminoacyl-tRNAs to the N-termini of proteins containing an N-terminal arginine or lysine. This is Leucyl/phenylalanyl-tRNA--protein transferase from Shewanella loihica (strain ATCC BAA-1088 / PV-4).